A 1680-amino-acid polypeptide reads, in one-letter code: Alpha-protein kinase 3 (1680 aa).

Residues 1–37 form a disordered region; it reads MGSRRAAGRGWGLGGRAGAGGDSEDDGPVWTPGPASR. Residues 9-21 show a composition bias toward gly residues; that stretch reads RGWGLGGRAGAGG. Residues 77-173 form the Ig-like 1 domain; it reads PLFETTLKSR…SGVLEVGTMT (97 aa). The residue at position 229 (Ser229) is a Phosphoserine. Disordered stretches follow at residues 237–288, 302–759, 785–950, 1078–1128, and 1147–1244; these read STPV…NGED, ELGP…CPRE, SEEA…GTRS, EGSA…LTGL, and PKVR…QRKA. Positions 320–337 are enriched in basic and acidic residues; that stretch reads KDEESKPGEQKLELEKAE. Polar residues predominate over residues 339-353; the sequence is SQCSSENVVPSTDKP. A compositionally biased stretch (pro residues) spans 402 to 426; that stretch reads APAPAPVPAPALAPAPVPVPAPTPV. Residues 514-532 are compositionally biased toward low complexity; sequence ESTTTSLSSQTSESMAQSL. Polar residues-rich tracts occupy residues 557 to 566 and 731 to 744; these read SPLQGQTSHK and ETQSEQLSMASLSS. Basic and acidic residues predominate over residues 785–796; that stretch reads SEEAAFRSHEDG. Polar residues predominate over residues 917–932; sequence SPTQSHPPEAMATSSE. 2 stretches are compositionally biased toward basic and acidic residues: residues 1087 to 1111 and 1151 to 1165; these read ERTSQESDKKGLLGEVEGHTVESRT and AGSDGEANKAEERES. Ser1199 carries the post-translational modification Phosphoserine. Residues 1231–1244 show a composition bias toward basic and acidic residues; the sequence is DEGKQEALAKQRKA. The 89-residue stretch at 1251–1339 folds into the Ig-like 2 domain; that stretch reads PQVIRKIRVE…GSASTDFCLS (89 aa). A disulfide bridge links Cys1273 with Cys1323. In terms of domain architecture, Alpha-type protein kinase spans 1367–1600; sequence KGLADSGCWG…YCDMLGLKPL (234 aa). The tract at residues 1603–1680 is disordered; it reads PEAAHPQAKA…DGSSKAQSMR (78 aa). 2 stretches are compositionally biased toward polar residues: residues 1639-1660 and 1671-1680; these read PQGSRKSAPSSRATLQASQAAT and DGSSKAQSMR.

The protein belongs to the protein kinase superfamily. Alpha-type protein kinase family. ALPK subfamily. As to expression, expressed in the heart and skeletal muscle of adult mice.

Its subcellular location is the nucleus. The catalysed reaction is L-seryl-[protein] + ATP = O-phospho-L-seryl-[protein] + ADP + H(+). It catalyses the reaction L-threonyl-[protein] + ATP = O-phospho-L-threonyl-[protein] + ADP + H(+). Its function is as follows. Involved in cardiomyocyte differentiation. The chain is Alpha-protein kinase 3 from Mus musculus (Mouse).